Reading from the N-terminus, the 504-residue chain is Protein nucleotidyltransferase YdiU (504 aa).

ATP contacts are provided by Gly99, Gly101, Arg102, Lys122, Asp134, Gly135, Arg185, and Arg192. Asp261 functions as the Proton acceptor in the catalytic mechanism. Asn262 and Asp271 together coordinate Mg(2+). Residue Asp271 coordinates ATP.

Belongs to the SELO family. Mg(2+) is required as a cofactor. The cofactor is Mn(2+).

It carries out the reaction L-seryl-[protein] + ATP = 3-O-(5'-adenylyl)-L-seryl-[protein] + diphosphate. The catalysed reaction is L-threonyl-[protein] + ATP = 3-O-(5'-adenylyl)-L-threonyl-[protein] + diphosphate. The enzyme catalyses L-tyrosyl-[protein] + ATP = O-(5'-adenylyl)-L-tyrosyl-[protein] + diphosphate. It catalyses the reaction L-histidyl-[protein] + UTP = N(tele)-(5'-uridylyl)-L-histidyl-[protein] + diphosphate. It carries out the reaction L-seryl-[protein] + UTP = O-(5'-uridylyl)-L-seryl-[protein] + diphosphate. The catalysed reaction is L-tyrosyl-[protein] + UTP = O-(5'-uridylyl)-L-tyrosyl-[protein] + diphosphate. In terms of biological role, nucleotidyltransferase involved in the post-translational modification of proteins. It can catalyze the addition of adenosine monophosphate (AMP) or uridine monophosphate (UMP) to a protein, resulting in modifications known as AMPylation and UMPylation. In Methylococcus capsulatus (strain ATCC 33009 / NCIMB 11132 / Bath), this protein is Protein nucleotidyltransferase YdiU.